Here is a 599-residue protein sequence, read N- to C-terminus: UvrABC system protein C (599 aa).

Residues 18–96 (QLPGVYRMLG…IKQHRPPYNI (79 aa)) form the GIY-YIG domain. In terms of domain architecture, UVR spans 207 to 242 (KELNQELIAKMEEAAEQLAFEKAMFYRDRLGLLREV).

This sequence belongs to the UvrC family. Interacts with UvrB in an incision complex.

Its subcellular location is the cytoplasm. Its function is as follows. The UvrABC repair system catalyzes the recognition and processing of DNA lesions. UvrC both incises the 5' and 3' sides of the lesion. The N-terminal half is responsible for the 3' incision and the C-terminal half is responsible for the 5' incision. The chain is UvrABC system protein C from Acinetobacter baylyi (strain ATCC 33305 / BD413 / ADP1).